Reading from the N-terminus, the 273-residue chain is Small ribosomal subunit protein eS1 (273 aa).

This sequence belongs to the eukaryotic ribosomal protein eS1 family. In terms of assembly, component of the small ribosomal subunit. Mature ribosomes consist of a small (40S) and a large (60S) subunit. The 40S subunit contains about 33 different proteins and 1 molecule of RNA (18S). The 60S subunit contains about 49 different proteins and 3 molecules of RNA (25S, 5.8S and 5S).

It is found in the cytoplasm. The polypeptide is Small ribosomal subunit protein eS1 (rps3a) (Dictyostelium discoideum (Social amoeba)).